The primary structure comprises 131 residues: NADH-quinone oxidoreductase subunit I 2 (131 aa).

4Fe-4S ferredoxin-type domains follow at residues 42 to 71 (LKVSHSKAKCVCCYLCPTVCPAKCITVEAG) and 81 to 110 (ERYEIDMLRCIFCGYCVEACPVDALKMTGE). Cysteine 51, cysteine 54, cysteine 57, cysteine 61, cysteine 90, cysteine 93, cysteine 96, and cysteine 100 together coordinate [4Fe-4S] cluster.

It belongs to the complex I 23 kDa subunit family. As to quaternary structure, NDH-1 is composed of 14 different subunits. Subunits NuoA, H, J, K, L, M, N constitute the membrane sector of the complex. [4Fe-4S] cluster serves as cofactor.

The protein resides in the cell inner membrane. It carries out the reaction a quinone + NADH + 5 H(+)(in) = a quinol + NAD(+) + 4 H(+)(out). In terms of biological role, NDH-1 shuttles electrons from NADH, via FMN and iron-sulfur (Fe-S) centers, to quinones in the respiratory chain. The immediate electron acceptor for the enzyme in this species is believed to be ubiquinone. Couples the redox reaction to proton translocation (for every two electrons transferred, four hydrogen ions are translocated across the cytoplasmic membrane), and thus conserves the redox energy in a proton gradient. This Geobacter metallireducens (strain ATCC 53774 / DSM 7210 / GS-15) protein is NADH-quinone oxidoreductase subunit I 2.